The primary structure comprises 90 residues: Phosphocarrier protein NPr (90 aa).

Residues 2 to 90 (TVKQTVEISN…ALFNAGFDED (89 aa)) form the HPr domain. Histidine 16 functions as the Pros-phosphohistidine intermediate in the catalytic mechanism.

The protein belongs to the HPr family.

It is found in the cytoplasm. Functionally, component of the phosphoenolpyruvate-dependent nitrogen-metabolic phosphotransferase system (nitrogen-metabolic PTS), that seems to be involved in regulating nitrogen metabolism. The phosphoryl group from phosphoenolpyruvate (PEP) is transferred to the phosphoryl carrier protein NPr by enzyme I-Ntr. Phospho-NPr then transfers it to EIIA-Ntr. Could function in the transcriptional regulation of sigma-54 dependent operons in conjunction with the NPr (PtsO) and EIIA-Ntr (PtsN) proteins. The protein is Phosphocarrier protein NPr (ptsO) of Klebsiella oxytoca.